Here is a 120-residue protein sequence, read N- to C-terminus: NAD(P)H-quinone oxidoreductase subunit 3, organellar chromatophore (120 aa).

3 consecutive transmembrane segments (helical) span residues 6–26, 64–84, and 89–109; these read GYDA…LALL, MFAL…PWAV, and LGLL…IALA.

It belongs to the complex I subunit 3 family. As to quaternary structure, NDH is composed of at least 16 different subunits, 5 of which are encoded in the nucleus.

The protein localises to the plastid. It is found in the organellar chromatophore thylakoid membrane. It catalyses the reaction a plastoquinone + NADH + (n+1) H(+)(in) = a plastoquinol + NAD(+) + n H(+)(out). The catalysed reaction is a plastoquinone + NADPH + (n+1) H(+)(in) = a plastoquinol + NADP(+) + n H(+)(out). NDH shuttles electrons from NAD(P)H:plastoquinone, via FMN and iron-sulfur (Fe-S) centers, to quinones in the photosynthetic chain and possibly in a chloroplast respiratory chain. The immediate electron acceptor for the enzyme in this species is believed to be plastoquinone. Couples the redox reaction to proton translocation, and thus conserves the redox energy in a proton gradient. This is NAD(P)H-quinone oxidoreductase subunit 3, organellar chromatophore from Paulinella chromatophora.